We begin with the raw amino-acid sequence, 82 residues long: Delta-ctenitoxin-Pn2c (82 aa).

The signal sequence occupies residues 1–17 (MKVAILFLSILVLAVAS). Residues 18-34 (ESIEESRDDFAVEELGR) constitute a propeptide that is removed on maturation. Disulfide bonds link Cys37–Cys51, Cys44–Cys57, Cys48–Cys80, Cys50–Cys65, and Cys59–Cys63.

Expressed by the venom gland.

It localises to the secreted. Reversible inhibitor of voltage-gated sodium channels (Nav). Delays the fast inactivation kinetics of neuronal-type sodium channels. In vivo, it induces rat penile erection. This effect may be due to the neuronal nitric oxide synthase (NOS1), since one of its selective inhibitor completely abolishes all the toxic effects of the toxin. This toxin also causes scratching, lacrimation, hypersalivation, sweating and agitation followed by spastic paralysis of the anterior and posterior extremities and death at dose levels of 0.24 mg/mouse. It is also insecticidal to the larval and adult forms of the house fly. This chain is Delta-ctenitoxin-Pn2c, found in Phoneutria nigriventer (Brazilian armed spider).